A 95-amino-acid chain; its full sequence is NADH-quinone oxidoreductase subunit 11 (95 aa).

Transmembrane regions (helical) follow at residues 1–21 (MSYL…VLTR), 25–45 (ILVF…LVGF), and 59–79 (MVIA…VAIF).

This sequence belongs to the complex I subunit 4L family. NDH-1 is composed of 15 different subunits, Nqo1 to Nqo15. The complex has a L-shaped structure, with the hydrophobic arm (subunits Nqo7, Nqo8 and Nqo10 to Nqo14) embedded in the membrane and the hydrophilic peripheral arm (subunits Nqo1 to Nqo6, Nqo9 and Nqo15) protruding into the bacterial cytoplasm. The hydrophilic domain contains all the redox centers.

The protein resides in the cell inner membrane. The enzyme catalyses a quinone + NADH + 5 H(+)(in) = a quinol + NAD(+) + 4 H(+)(out). Its function is as follows. NDH-1 shuttles electrons from NADH, via FMN and iron-sulfur (Fe-S) centers, to quinones in the respiratory chain. The immediate electron acceptor for the enzyme in this species is menaquinone. Couples the redox reaction to proton translocation (for every two electrons transferred, four hydrogen ions are translocated across the cytoplasmic membrane), and thus conserves the redox energy in a proton gradient required for the synthesis of ATP. The polypeptide is NADH-quinone oxidoreductase subunit 11 (nqo11) (Thermus thermophilus (strain ATCC 27634 / DSM 579 / HB8)).